Consider the following 252-residue polypeptide: MNRNFSIDAILARKPVEKRKQIITKDNCKFIRVFLQSSNLWRRFHNLGTEMIVTKSGRRMFPTLSVIIAGLDPVKSYVVMVDLECIEMKRFRYSFHQSKWISTGPGESELPSRMFVHTDSPARGAHWMRAPVSFDKMKLTNNQLDNNGHIIVNSMHKYRPRVHIIEQDDSQKRHTFSFEETEFIAVTAYQNHRITSLKIESNPFAKGFRECEVQGIEMNSVGGMTGGPAFQSVFPLIFPYFANLASNMNVNK.

The T-box DNA-binding region spans 40-210 (LWRRFHNLGT…SNPFAKGFRE (171 aa)).

May interact with unc-37.

It localises to the nucleus. Probable transcription factor required for the cell fate specification of non-striated uterine muscle precursor cells. Furthermore, may function with the transcriptional corepressor unc-37. The polypeptide is T-box transcription factor mls-1 (Caenorhabditis elegans).